Consider the following 612-residue polypeptide: Beta-mannosyltransferase 5 (612 aa).

Residues 1 to 12 (MVQKQYRFAPKS) lie on the Cytoplasmic side of the membrane. A helical transmembrane segment spans residues 13-33 (IFTFVFLCFVAIVVIISTSSL). The Extracellular segment spans residues 34–612 (VQVEESLDPI…YRAHLKRWQN (579 aa)). Residues Asn224, Asn230, and Asn480 are each glycosylated (N-linked (GlcNAc...) asparagine).

This sequence belongs to the BMT family.

It is found in the membrane. Beta-mannosyltransferase involved in cell wall biosynthesis. Required for beta-1,2-mannose transfer on phospholipomannan. The sequence is that of Beta-mannosyltransferase 5 (BMT5) from Candida albicans (strain SC5314 / ATCC MYA-2876) (Yeast).